A 201-amino-acid polypeptide reads, in one-letter code: Recombination protein RecR (201 aa).

A C4-type zinc finger spans residues 60–75 (CKSCGNIDTRNPCTVC). The region spanning 83-178 (SIIVVVADVA…KVTRLAHGVP (96 aa)) is the Toprim domain.

Belongs to the RecR family.

May play a role in DNA repair. It seems to be involved in an RecBC-independent recombinational process of DNA repair. It may act with RecF and RecO. The chain is Recombination protein RecR from Rhodopseudomonas palustris (strain BisB5).